Here is a 143-residue protein sequence, read N- to C-terminus: Transcription antitermination protein NusB (143 aa).

This sequence belongs to the NusB family.

Involved in transcription antitermination. Required for transcription of ribosomal RNA (rRNA) genes. Binds specifically to the boxA antiterminator sequence of the ribosomal RNA (rrn) operons. This chain is Transcription antitermination protein NusB, found in Methylacidiphilum infernorum (isolate V4) (Methylokorus infernorum (strain V4)).